The chain runs to 166 residues: PTS system glucose-specific EIIA component (166 aa).

The PTS EIIA type-1 domain maps to D36 to N140. Positions 73 and 88 each coordinate Zn(2+). H88 acts as the Tele-phosphohistidine intermediate; for EIIA activity in catalysis. The residue at position 88 (H88) is a Phosphohistidine; by HPr.

As to quaternary structure, heterodimer with glycerol kinase (glpk). Zn(2+) is required as a cofactor.

Its subcellular location is the cytoplasm. The phosphoenolpyruvate-dependent sugar phosphotransferase system (sugar PTS), a major carbohydrate active transport system, catalyzes the phosphorylation of incoming sugar substrates concomitantly with their translocation across the cell membrane. The enzyme II complex composed of PtsG and Crr is involved in glucose transport. The polypeptide is PTS system glucose-specific EIIA component (crr) (Haemophilus influenzae (strain ATCC 51907 / DSM 11121 / KW20 / Rd)).